The sequence spans 755 residues: Leucine-rich repeat-containing protein 36 (755 aa).

2 LRR repeats span residues 51–72 (SLRSLDLSRNLITSLKGIQYLC) and 73–94 (SLQELNLYYNNIPSLVEVSRLQ). The region spanning 107-146 (NPVVRKDTDYRLFAVYTLQTLEKLDDRAVRDSERRAAKLH) is the LRRCT domain. Disordered stretches follow at residues 354-374 (GKNYREHSIKPSQDKKATTSH) and 448-517 (LPPG…PPIS). The segment covering 356–370 (NYREHSIKPSQDKKA) has biased composition (basic and acidic residues). Over residues 498–510 (LSSDLGSLHGLSG) the composition is skewed to low complexity. A coiled-coil region spans residues 601 to 671 (VESLKQKLVK…ELTQLKRLEE (71 aa)). Positions 701–755 (YSGKSLLPPEKSHPLGRSSPFGKSTLSSSSPMVHDTGQYLIQSVSEADPEPSLWS) are disordered. Residues 721–731 (FGKSTLSSSSP) are compositionally biased toward polar residues.

This Mus musculus (Mouse) protein is Leucine-rich repeat-containing protein 36 (Lrrc36).